A 166-amino-acid polypeptide reads, in one-letter code: Endoribonuclease YbeY (166 aa).

Residues His136, His140, and His146 each coordinate Zn(2+).

The protein belongs to the endoribonuclease YbeY family. Zn(2+) is required as a cofactor.

The protein resides in the cytoplasm. Its function is as follows. Single strand-specific metallo-endoribonuclease involved in late-stage 70S ribosome quality control and in maturation of the 3' terminus of the 16S rRNA. This chain is Endoribonuclease YbeY, found in Synechococcus sp. (strain CC9605).